The following is a 129-amino-acid chain: UPF0344 protein SSP1805 (129 aa).

A run of 4 helical transmembrane segments spans residues 1–21 (MLHMHIASWVLLIILFFAAYF), 36–56 (IHMLLRLFMLLVLISGFWVWI), 68–88 (MLLTLKMICGVAVVALMEVTI), and 100–120 (LMWTTIVVIILTMIIGIILPM).

This sequence belongs to the UPF0344 family.

The protein resides in the cell membrane. The sequence is that of UPF0344 protein SSP1805 from Staphylococcus saprophyticus subsp. saprophyticus (strain ATCC 15305 / DSM 20229 / NCIMB 8711 / NCTC 7292 / S-41).